An 875-amino-acid polypeptide reads, in one-letter code: Alanine--tRNA ligase (875 aa).

Zn(2+) is bound by residues H565, H569, C666, and H670.

This sequence belongs to the class-II aminoacyl-tRNA synthetase family. Zn(2+) is required as a cofactor.

Its subcellular location is the cytoplasm. It catalyses the reaction tRNA(Ala) + L-alanine + ATP = L-alanyl-tRNA(Ala) + AMP + diphosphate. Catalyzes the attachment of alanine to tRNA(Ala) in a two-step reaction: alanine is first activated by ATP to form Ala-AMP and then transferred to the acceptor end of tRNA(Ala). Also edits incorrectly charged Ser-tRNA(Ala) and Gly-tRNA(Ala) via its editing domain. The chain is Alanine--tRNA ligase from Leptothrix cholodnii (strain ATCC 51168 / LMG 8142 / SP-6) (Leptothrix discophora (strain SP-6)).